Reading from the N-terminus, the 397-residue chain is Phosphoglycerate kinase (397 aa).

Residues 21–23, Arg37, 60–63, Arg119, and Arg152 contribute to the substrate site; these read DFN and HLGR. ATP-binding positions include Lys203, Gly294, Glu325, and 354 to 357; that span reads GGDS.

It belongs to the phosphoglycerate kinase family. As to quaternary structure, monomer.

The protein resides in the cytoplasm. It carries out the reaction (2R)-3-phosphoglycerate + ATP = (2R)-3-phospho-glyceroyl phosphate + ADP. The protein operates within carbohydrate degradation; glycolysis; pyruvate from D-glyceraldehyde 3-phosphate: step 2/5. The protein is Phosphoglycerate kinase of Chlorobaculum tepidum (strain ATCC 49652 / DSM 12025 / NBRC 103806 / TLS) (Chlorobium tepidum).